Here is an 895-residue protein sequence, read N- to C-terminus: DNA double-strand break repair Rad50 ATPase (895 aa).

Residues 32 to 38 (NGAGKSS) and Gln137 each bind ATP. The stretch at 183–253 (SDYDYLKNEL…LNAQLETIKK (71 aa)) forms a coiled coil. Residues 411–507 (RAEINSSLMQ…ERKHQKKLLD (97 aa)) enclose the Zinc-hook domain. Positions 455 and 458 each coordinate Zn(2+). Coiled coils occupy residues 464-510 (TEKS…DRIN) and 618-647 (ENSL…AMDE).

The protein belongs to the SMC family. RAD50 subfamily. As to quaternary structure, homodimer. Forms a heterotetramer composed of two Mre11 subunits and two Rad50 subunits. It depends on Zn(2+) as a cofactor.

In terms of biological role, part of the Rad50/Mre11 complex, which is involved in the early steps of DNA double-strand break (DSB) repair. The complex may facilitate opening of the processed DNA ends to aid in the recruitment of HerA and NurA. Rad50 controls the balance between DNA end bridging and DNA resection via ATP-dependent structural rearrangements of the Rad50/Mre11 complex. The polypeptide is DNA double-strand break repair Rad50 ATPase (Thermoplasma volcanium (strain ATCC 51530 / DSM 4299 / JCM 9571 / NBRC 15438 / GSS1)).